The following is a 1071-amino-acid chain: SLIT-ROBO Rho GTPase-activating protein 2 (1071 aa).

The 304-residue stretch at 22-325 folds into the F-BAR domain; that stretch reads KEIRAQLTEQ…AVENLDATSD (304 aa). A compositionally biased stretch (basic and acidic residues) spans 181 to 203; the sequence is LKEAEKQEEKQIGKSVKQEDRQT. The interval 181–211 is disordered; that stretch reads LKEAEKQEEKQIGKSVKQEDRQTPRSPDSTA. Residue Ser-206 is modified to Phosphoserine. The stretch at 362 to 401 forms a coiled coil; it reads VQSELVQRCQQLQSRLSTLKIENEEVKKTMEATLQTIQDI. Phosphoserine is present on residues Ser-427, Ser-500, Ser-691, and Ser-695. The 191-residue stretch at 489-679 folds into the Rho-GAP domain; that stretch reads ARRSSTVRKQ…TIIIQHENIF (191 aa). The disordered stretch occupies residues 698-726; that stretch reads DYCDSPHGETTSVEDSTQDVTAEHHTSDD. A compositionally biased stretch (polar residues) spans 705–717; that stretch reads GETTSVEDSTQDV. Ser-724 bears the Phosphoserine mark. Residues 728–787 form the SH3 domain; that stretch reads CEPIEAIAKFDYVGRTARELSFKKGASLLLYQRASDDWWEGRHNGIDGLIPHQYIVVQDT. Position 795 is a phosphoserine (Ser-795). Positions 837–936 are disordered; it reads QRKRPESGSI…RSKSFNNHRP (100 aa). Over residues 855–866 the composition is skewed to low complexity; the sequence is HGLSSSLTDSSS. Polar residues-rich tracts occupy residues 874-885 and 897-907; these read RPSSQPIMSQSL and GHGSLNSISRH. At Ser-916 the chain carries Phosphoserine. Residues 919–933 show a composition bias toward polar residues; the sequence is IRKTATAGRSKSFNN. Arg-927 is subject to Symmetric dimethylarginine; by PRMT5. Ser-930 is modified (phosphoserine). Residues 940-967 are a coiled coil; sequence EVIAQDIEATMNSALNELRELERQSSVK. The segment at 983–1012 is disordered; that stretch reads SPVVAPTSEPSSPLHTQLLKDPEPAFQRSA. Phosphoserine occurs at positions 990, 994, 1013, and 1027. The disordered stretch occupies residues 1029 to 1071; that stretch reads KMAAPVKPPATRPKPTVFPKTNATSPGVNSSTSPQSTDKSCTV. Over residues 1047 to 1071 the composition is skewed to polar residues; that stretch reads PKTNATSPGVNSSTSPQSTDKSCTV.

As to quaternary structure, homodimer. Heterodimer; forms a heterodimer with SRGAP2C, altering SRGAP2 function. Forms a heterooligomer with SRGAP1 and SRGAP3 through its F-BAR domain. Interacts (via SH3 domain) with GPHN. Interacts (via SH3 domain) with FMNL1 (activated by RAC1); regulates the actin filament severing activity of FMNL1 and actin dynamics. Interacts (via SH3 domain) with FMNL3. Interacts with RAC1; specifically stimulates RAC1 GTPase activity. Interacts (via F-BAR domain) with HOMER1. Interacts with ROBO1 and ROBO2. Interacts with FASLG. Interacts with PRMT5. Methylation at Arg-927 is required for the stimulation of cell migration, dimerization and localization at the plasma membrane protrusions.

Its subcellular location is the cell membrane. The protein localises to the cell projection. The protein resides in the dendritic spine. It is found in the postsynaptic density. It localises to the postsynaptic cell membrane. Its subcellular location is the lamellipodium. The protein localises to the cytoplasmic vesicle. The protein resides in the phagosome. It is found in the nucleus. It localises to the cytoplasm. Its subcellular location is the cytosol. With respect to regulation, activity is strongly inhibited by SRGAP2C, which heterodimerize with SRGAP2/SRGAP2A, thereby reducing SRGAP2/SRGAP2A levels through proteasome-dependent degradation. Its function is as follows. Postsynaptic RAC1 GTPase activating protein (GAP) that plays a key role in neuronal morphogenesis and migration mainly during development of the cerebral cortex. Regulates excitatory and inhibitory synapse maturation and density in cortical pyramidal neurons. SRGAP2/SRGAP2A limits excitatory and inhibitory synapse density through its RAC1-specific GTPase activating activity, while it promotes maturation of both excitatory and inhibitory synapses through its ability to bind to the postsynaptic scaffolding protein HOMER1 at excitatory synapses, and the postsynaptic protein GPHN at inhibitory synapses. Mechanistically, acts by binding and deforming membranes, thereby regulating actin dynamics to regulate cell migration and differentiation. Promotes cell repulsion and contact inhibition of locomotion: localizes to protrusions with curved edges and controls the duration of RAC1 activity in contact protrusions. In non-neuronal cells, may also play a role in cell migration by regulating the formation of lamellipodia and filopodia. This Homo sapiens (Human) protein is SLIT-ROBO Rho GTPase-activating protein 2.